We begin with the raw amino-acid sequence, 408 residues long: Acetate kinase (408 aa).

A Mg(2+)-binding site is contributed by Asn7. Lys14 is a binding site for ATP. Residue Arg98 participates in substrate binding. Catalysis depends on Asp155, which acts as the Proton donor/acceptor. ATP contacts are provided by residues His214–Gly218, Asp289–Arg291, and Gly337–Asn341. Glu390 is a Mg(2+) binding site.

This sequence belongs to the acetokinase family. In terms of assembly, homodimer. It depends on Mg(2+) as a cofactor. Mn(2+) serves as cofactor.

The protein resides in the cytoplasm. The catalysed reaction is acetate + ATP = acetyl phosphate + ADP. Its pathway is metabolic intermediate biosynthesis; acetyl-CoA biosynthesis; acetyl-CoA from acetate: step 1/2. Functionally, catalyzes the formation of acetyl phosphate from acetate and ATP. Can also catalyze the reverse reaction. This chain is Acetate kinase, found in Cyanothece sp. (strain PCC 7425 / ATCC 29141).